The primary structure comprises 334 residues: Succinate receptor 1 (334 aa).

Topologically, residues 5–31 are extracellular; the sequence is MAWNATCKNWLAAEAALEKYYLSIFYG. An N-linked (GlcNAc...) asparagine glycan is attached at N8. A helical transmembrane segment spans residues 32–52; sequence IEFVVGVLGNTIVVYGYIFSL. The Cytoplasmic portion of the chain corresponds to 53–59; the sequence is KNWNSSN. Residues 60–80 traverse the membrane as a helical segment; sequence IYLFNLSVSDLAFLCTLPMLI. Residues 81–103 lie on the Extracellular side of the membrane; the sequence is RSYANGNWIYGDVLCISNRYVLH. C95 and C172 are joined by a disulfide. The helical transmembrane segment at 104 to 124 threads the bilayer; the sequence is ANLYTSILFLTFISIDRYLII. Residues 125–137 lie on the Cytoplasmic side of the membrane; sequence KYPFREHLLQKKE. A helical membrane pass occupies residues 138–158; the sequence is FAILISLAIWVLVTLELLPIL. Over 159–185 the chain is Extracellular; the sequence is PLINPVITDNGTTCNDFASSGDPNYNL. A glycan (N-linked (GlcNAc...) asparagine) is linked at N168. The helical transmembrane segment at 186–206 threads the bilayer; it reads IYSMCLTLLGFLIPLFVMCFF. Residues 207-230 are Cytoplasmic-facing; that stretch reads YYKIALFLKQRNRQVATALPLEKP. A helical transmembrane segment spans residues 231-251; that stretch reads LNLVIMAVVIFSVLFTPYHVM. At 252 to 281 the chain is on the extracellular side; that stretch reads RNVRIASRLGSWKQYQCTQVVINSFYIVTR. A helical membrane pass occupies residues 282–302; the sequence is PLAFLNSVINPVFYFLLGDHF. Topologically, residues 303-334 are cytoplasmic; the sequence is RDMLMNQLRHNFKSLTSFSRWAHELLLSFREK.

The protein belongs to the G-protein coupled receptor 1 family. As to expression, expressed specifically in kidney. Highly expressed in immature dendritic cells, expression rapidly downregulates after maturation. Also expressed in macrophages.

Its subcellular location is the cell membrane. Functionally, g protein-coupled receptor for succinate able to mediate signaling through Gq/GNAQ or Gi/GNAI second messengers depending on the cell type and the processes regulated. Succinate-SUCNR1 signaling serves as a link between metabolic stress, inflammation and energy homeostasis. In macrophages, plays a range of immune-regulatory roles. During inflammation, succinate-SUCNR1 signaling may act as an anti-inflammatory mediator or boost inflammation depending on the inflammatory status of cells. Hyperpolarizes M2 macrophages versus M1 phenotype through Gq signaling by regulating the transcription of genes involved in immune function. In activated M1 macrophages, plays a pro-inflammatory role in response to LPS. Expressed in dendritic cells, where it is involved in the sensing of immunological danger and enhances immunity. Mediates succinate triggered intracelleular calcium mobilization, induces migratory responses and acts in synergy with Toll-like receptor ligands for the production of proinflammatory cytokines as well as an enhancement of antigen-specific activation of helper T cells. In the small intestine, mediates the activation of tuft cells by dietary succinate and triggers type 2 immunity. In adipocytes, plays an important role in the control of energy metabolism. In response to succinate, controls leptin expression in an AMPK-JNK-CEBPA-dependent as well as circadian clock-regulated manner. In muscle tissue, is expressed in non-muscle cells and coordinates muscle remodeling in response to the succinate produced during exercise training in a paracrine manner. In retina, acts as a mediator of vessel growth during retinal development. In response to succinate, regulates the production of angiogenic factors, including VEGF, by retinal ganglion neurons. The chain is Succinate receptor 1 from Homo sapiens (Human).